Reading from the N-terminus, the 1345-residue chain is DNA-directed RNA polymerase subunit beta' (1345 aa).

Residues C60, C62, C75, and C78 each coordinate Zn(2+). 3 residues coordinate Mg(2+): D536, D538, and D540. The Zn(2+) site is built by C895, C974, C981, and C984.

Belongs to the RNA polymerase beta' chain family. In terms of assembly, the RNAP catalytic core consists of 2 alpha, 1 beta, 1 beta' and 1 omega subunit. When a sigma factor is associated with the core the holoenzyme is formed, which can initiate transcription. Mg(2+) is required as a cofactor. Zn(2+) serves as cofactor.

It carries out the reaction RNA(n) + a ribonucleoside 5'-triphosphate = RNA(n+1) + diphosphate. Its function is as follows. DNA-dependent RNA polymerase catalyzes the transcription of DNA into RNA using the four ribonucleoside triphosphates as substrates. The sequence is that of DNA-directed RNA polymerase subunit beta' from Bifidobacterium longum (strain DJO10A).